The following is a 104-amino-acid chain: Small ribosomal subunit protein uS10 (104 aa).

This sequence belongs to the universal ribosomal protein uS10 family. Part of the 30S ribosomal subunit.

Involved in the binding of tRNA to the ribosomes. This is Small ribosomal subunit protein uS10 from Thermoplasma acidophilum (strain ATCC 25905 / DSM 1728 / JCM 9062 / NBRC 15155 / AMRC-C165).